Consider the following 500-residue polypeptide: Probable cytosol aminopeptidase (500 aa).

Mn(2+)-binding residues include lysine 267 and aspartate 272. Lysine 279 is a catalytic residue. Residues aspartate 290, aspartate 349, and glutamate 351 each coordinate Mn(2+). Residue arginine 353 is part of the active site.

The protein belongs to the peptidase M17 family. It depends on Mn(2+) as a cofactor.

Its subcellular location is the cytoplasm. It catalyses the reaction Release of an N-terminal amino acid, Xaa-|-Yaa-, in which Xaa is preferably Leu, but may be other amino acids including Pro although not Arg or Lys, and Yaa may be Pro. Amino acid amides and methyl esters are also readily hydrolyzed, but rates on arylamides are exceedingly low.. It carries out the reaction Release of an N-terminal amino acid, preferentially leucine, but not glutamic or aspartic acids.. In terms of biological role, presumably involved in the processing and regular turnover of intracellular proteins. Catalyzes the removal of unsubstituted N-terminal amino acids from various peptides. The chain is Probable cytosol aminopeptidase from Tolumonas auensis (strain DSM 9187 / NBRC 110442 / TA 4).